A 395-amino-acid chain; its full sequence is Chorismate synthase (395 aa).

NADP(+) contacts are provided by arginine 40 and arginine 46. FMN is bound by residues 135 to 137 (RAS) and 256 to 257 (QA). The segment covering 272 to 283 (RRGSQAHDEMRP) has biased composition (basic and acidic residues). Positions 272 to 296 (RRGSQAHDEMRPGPDGILRSTNRAG) are disordered. FMN contacts are provided by residues glycine 300, 315–319 (KPIST), and arginine 341.

Belongs to the chorismate synthase family. Homotetramer. Requires FMNH2 as cofactor.

It catalyses the reaction 5-O-(1-carboxyvinyl)-3-phosphoshikimate = chorismate + phosphate. The protein operates within metabolic intermediate biosynthesis; chorismate biosynthesis; chorismate from D-erythrose 4-phosphate and phosphoenolpyruvate: step 7/7. Its function is as follows. Catalyzes the anti-1,4-elimination of the C-3 phosphate and the C-6 proR hydrogen from 5-enolpyruvylshikimate-3-phosphate (EPSP) to yield chorismate, which is the branch point compound that serves as the starting substrate for the three terminal pathways of aromatic amino acid biosynthesis. This reaction introduces a second double bond into the aromatic ring system. The chain is Chorismate synthase from Rhodococcus opacus (strain B4).